We begin with the raw amino-acid sequence, 1165 residues long: DNA-directed RNA polymerase III subunit RPC2 (1165 aa).

The tract at residues 1-21 is disordered; it reads MGVNTAGDPQKSQPKINKGGI. Residues cysteine 1111, cysteine 1114, cysteine 1123, and cysteine 1126 each contribute to the Zn(2+) site. A C4-type zinc finger spans residues 1111-1126; it reads CGQCGLLGYKGWCNSC.

It belongs to the RNA polymerase beta chain family. Component of the RNA polymerase III (Pol III) complex consisting of 17 subunits.

It is found in the nucleus. It catalyses the reaction RNA(n) + a ribonucleoside 5'-triphosphate = RNA(n+1) + diphosphate. In terms of biological role, DNA-dependent RNA polymerase catalyzes the transcription of DNA into RNA using the four ribonucleoside triphosphates as substrates. Second largest core component of RNA polymerase III which synthesizes small RNAs, such as 5S rRNA and tRNAs. Proposed to contribute to the polymerase catalytic activity and forms the polymerase active center together with the largest subunit. Pol III is composed of mobile elements and RPC2 is part of the core element with the central large cleft and probably a clamp element that moves to open and close the cleft. In Schizosaccharomyces pombe (strain 972 / ATCC 24843) (Fission yeast), this protein is DNA-directed RNA polymerase III subunit RPC2 (rpc2).